We begin with the raw amino-acid sequence, 301 residues long: Runt-related transcription factor rnt-1 (301 aa).

A Runt domain is found at Asn10 to Ile138. Interaction with DNA stretches follow at residues Arg40–Ser44, Arg95–Gly103, and Val128–Arg137. Chloride is bound by residues Arg99 and Val130. A disordered region spans residues Pro237 to Phe301. Ser255 bears the Phosphoserine mark. Residues Ser255–Ser276 are compositionally biased toward polar residues. The span at Val285–Phe301 shows a compositional bias: low complexity.

In terms of assembly, interacts with CBFbeta homolog bro-1; acts to increase the affinity and specificity of interaction of rnt-1 with DNA. Interacts with TGF-beta pathway protein sma-4. In terms of processing, may be ubiquitinated in order to be targeted for proteasome-mediated degradation in intestinal cells. Post-translationally, may be phosphorylated by members of the p38 MAP kinase pathway. Expressed in the intestine.

Its subcellular location is the nucleus. Transcription factor. Binds to regulatory DNA sequences in order to modulate transcription; negatively autoregulates its own expression, perhaps dependent upon CBF beta homolog bro-1. Promotes proliferation, and prevents differentiation, of seam cells, a stem cell-like lineage, acting in concert with bro-1. Required for controlling cell proliferation in the seam cells, perhaps by repressing expression of cyclin-dependent kinase inhibitor cki-1. Inhibition of seam cell differentiation is regulated by rnt-1 and bro-1, perhaps acting upstream of pop-1, by antagonizing pop-1 repressor function. Required for asymmetrical cell divisions in the lineage derived from a posterior embryonic seam cell, the T blast cell, and for asymmetric expression of zinc finger protein tlp-1. Regulates growth and male tail development. Involved in the oxidative stress response, perhaps downstream of the p38 MAP kinase pathway, and acting as part of a negative feedback loop via a transcriptional target gene, tyrosine-protein phosphatase vhp-1. Positively modulates dopaminergic signaling in a non-cell autonomous manner. May be involved in TGF-beta signaling. In Caenorhabditis elegans, this protein is Runt-related transcription factor rnt-1.